The chain runs to 150 residues: Regulatory protein RecX (150 aa).

Belongs to the RecX family.

It is found in the cytoplasm. Modulates RecA activity. This is Regulatory protein RecX from Ectopseudomonas mendocina (strain ymp) (Pseudomonas mendocina).